An 89-amino-acid polypeptide reads, in one-letter code: Probable monothiol glutaredoxin GrlA (89 aa).

A Glutaredoxin domain is found at 1–89; the sequence is MLYMKGTPKM…EPMLRDAVAA (89 aa). Residue Lys5 coordinates glutathione. Residue Cys13 coordinates [2Fe-2S] cluster. Glutathione is bound by residues Arg42, Phe54, and 67–68; that span reads SD.

The protein belongs to the glutaredoxin family. Monothiol subfamily.

This is Probable monothiol glutaredoxin GrlA (grlA) from Legionella pneumophila subsp. pneumophila (strain Philadelphia 1 / ATCC 33152 / DSM 7513).